The sequence spans 330 residues: Stearoyl-CoA desaturase 5 (330 aa).

The Cytoplasmic segment spans residues 1–49; that stretch reads MPGPATDAGKIPFCDAKEEIRAGLESSEGGGGPERPGARGQRQNIVWRN. N49 lines the substrate pocket. A helical membrane pass occupies residues 50–70; sequence VVLMSLLHLGAVYSLVLIPKA. The Lumenal portion of the chain corresponds to 71 to 72; it reads KP. A helical transmembrane segment spans residues 73-93; it reads LTLLWAYFCFLLAALGVTAGA. Residues H94 and H99 each contribute to the Fe cation site. Residues 94 to 99 carry the Histidine box-1 motif; that stretch reads HRLWSH. The Cytoplasmic portion of the chain corresponds to 94–193; that stretch reads HRLWSHRSYR…VVRIQRKYYK (100 aa). Substrate contacts are provided by N122, R129, and D130. Residues H131, H134, and H135 each contribute to the Fe cation site. Positions 131-135 match the Histidine box-2 motif; that stretch reads HRAHH. Substrate is bound by residues R162 and K163. Residues 194-214 form a helical membrane-spanning segment; it reads ISVVLMCFVVPTLVPWYIWGE. Residue S215 is a topological domain, lumenal. The helical transmembrane segment at 216 to 238 threads the bilayer; the sequence is LWNSYFLASILRYTISLNISWLV. W236 serves as a coordination point for substrate. The Cytoplasmic portion of the chain corresponds to 239–330; sequence NSAAHMYGNR…RKARTGDSSA (92 aa). 4 residues coordinate Fe cation: H243, H272, H275, and H276. A Histidine box-3 motif is present at residues 272-276; it reads HNYHH.

This sequence belongs to the fatty acid desaturase type 1 family. As to quaternary structure, may self-associate and form homodimers. Fe(2+) serves as cofactor. As to expression, detected in fetal brain, and at lower levels in fetal kidney. Detected in adult brain and pancreas, and at lower levels in kidney and lung. Expressed in spiral ganglion cells and the organ of Corti of fetal cochlea.

It is found in the endoplasmic reticulum membrane. It carries out the reaction octadecanoyl-CoA + 2 Fe(II)-[cytochrome b5] + O2 + 2 H(+) = (9Z)-octadecenoyl-CoA + 2 Fe(III)-[cytochrome b5] + 2 H2O. The catalysed reaction is hexadecanoyl-CoA + 2 Fe(II)-[cytochrome b5] + O2 + 2 H(+) = (9Z)-hexadecenoyl-CoA + 2 Fe(III)-[cytochrome b5] + 2 H2O. Functionally, stearoyl-CoA desaturase that utilizes O(2) and electrons from reduced cytochrome b5 to introduce the first double bond into saturated fatty acyl-CoA substrates. Catalyzes the insertion of a cis double bond at the delta-9 position into fatty acyl-CoA substrates including palmitoyl-CoA and stearoyl-CoA. Gives rise to a mixture of 16:1 and 18:1 unsaturated fatty acids. Involved in neuronal cell proliferation and differentiation through down-regulation of EGFR/AKT/MAPK and Wnt signaling pathways. The protein is Stearoyl-CoA desaturase 5 (SCD5) of Homo sapiens (Human).